Reading from the N-terminus, the 779-residue chain is Nucleolar complex protein 3 homolog (779 aa).

Disordered stretches follow at residues 1 to 20 and 100 to 189; these read MGFASASREEKLKMMKTNKT and NAKR…SHLS. The span at 114 to 124 shows a compositional bias: acidic residues; the sequence is DSDEDEDEDDV. Over residues 136 to 160 the composition is skewed to basic and acidic residues; it reads EEGHEELLPIKLKDGTLIRPTREKE. Residues 161 to 178 are compositionally biased toward acidic residues; it reads VEEQEEEEKSDIDEGEED. Residues 434–474 adopt a coiled-coil conformation; the sequence is AKKYQIKKERASKTAKKYKKQLARLEADLLEVEAEESLTKK.

Belongs to the CBF/MAK21 family.

It is found in the nucleus. It localises to the nucleolus. The polypeptide is Nucleolar complex protein 3 homolog (Caenorhabditis briggsae).